Consider the following 509-residue polypeptide: ATP synthase subunit alpha (509 aa).

169–176 serves as a coordination point for ATP; that stretch reads GDRQTGKT.

It belongs to the ATPase alpha/beta chains family. F-type ATPases have 2 components, CF(1) - the catalytic core - and CF(0) - the membrane proton channel. CF(1) has five subunits: alpha(3), beta(3), gamma(1), delta(1), epsilon(1). CF(0) has three main subunits: a(1), b(2) and c(9-12). The alpha and beta chains form an alternating ring which encloses part of the gamma chain. CF(1) is attached to CF(0) by a central stalk formed by the gamma and epsilon chains, while a peripheral stalk is formed by the delta and b chains.

It is found in the cell inner membrane. The catalysed reaction is ATP + H2O + 4 H(+)(in) = ADP + phosphate + 5 H(+)(out). Functionally, produces ATP from ADP in the presence of a proton gradient across the membrane. The alpha chain is a regulatory subunit. In Rhizobium johnstonii (strain DSM 114642 / LMG 32736 / 3841) (Rhizobium leguminosarum bv. viciae), this protein is ATP synthase subunit alpha.